Reading from the N-terminus, the 271-residue chain is NADH-quinone oxidoreductase subunit B (271 aa).

[4Fe-4S] cluster contacts are provided by Cys-37, Cys-38, Cys-103, and Cys-132. The tract at residues 227-271 (LAPPSVFGRAKRIPVDPKPSDEARAHGPGPTTESIGDVDGPDRGI) is disordered. The span at 239–251 (IPVDPKPSDEARA) shows a compositional bias: basic and acidic residues.

It belongs to the complex I 20 kDa subunit family. As to quaternary structure, NDH-1 is composed of 14 different subunits. Subunits NuoB, C, D, E, F, and G constitute the peripheral sector of the complex. Requires [4Fe-4S] cluster as cofactor.

The protein resides in the cell membrane. It carries out the reaction a quinone + NADH + 5 H(+)(in) = a quinol + NAD(+) + 4 H(+)(out). Its function is as follows. NDH-1 shuttles electrons from NADH, via FMN and iron-sulfur (Fe-S) centers, to quinones in the respiratory chain. The immediate electron acceptor for the enzyme in this species is believed to be a menaquinone. Couples the redox reaction to proton translocation (for every two electrons transferred, four hydrogen ions are translocated across the cytoplasmic membrane), and thus conserves the redox energy in a proton gradient. The sequence is that of NADH-quinone oxidoreductase subunit B from Frankia casuarinae (strain DSM 45818 / CECT 9043 / HFP020203 / CcI3).